We begin with the raw amino-acid sequence, 160 residues long: SsrA-binding protein (160 aa).

Residues 134–160 (YDKRDTERERDSNRELHRAVRNKGKED) form a disordered region.

The protein belongs to the SmpB family.

The protein resides in the cytoplasm. Required for rescue of stalled ribosomes mediated by trans-translation. Binds to transfer-messenger RNA (tmRNA), required for stable association of tmRNA with ribosomes. tmRNA and SmpB together mimic tRNA shape, replacing the anticodon stem-loop with SmpB. tmRNA is encoded by the ssrA gene; the 2 termini fold to resemble tRNA(Ala) and it encodes a 'tag peptide', a short internal open reading frame. During trans-translation Ala-aminoacylated tmRNA acts like a tRNA, entering the A-site of stalled ribosomes, displacing the stalled mRNA. The ribosome then switches to translate the ORF on the tmRNA; the nascent peptide is terminated with the 'tag peptide' encoded by the tmRNA and targeted for degradation. The ribosome is freed to recommence translation, which seems to be the essential function of trans-translation. This chain is SsrA-binding protein, found in Pseudomonas fluorescens (strain SBW25).